The following is a 184-amino-acid chain: NADH-quinone oxidoreductase subunit B (184 aa).

Residues Cys37, Cys38, Cys103, and Cys132 each contribute to the [4Fe-4S] cluster site. Positions 164 to 184 (HEREEAAKHALPTHSMKGLLR) are disordered.

It belongs to the complex I 20 kDa subunit family. NDH-1 is composed of 14 different subunits. Subunits NuoB, C, D, E, F, and G constitute the peripheral sector of the complex. It depends on [4Fe-4S] cluster as a cofactor.

The protein resides in the cell membrane. It carries out the reaction a quinone + NADH + 5 H(+)(in) = a quinol + NAD(+) + 4 H(+)(out). In terms of biological role, NDH-1 shuttles electrons from NADH, via FMN and iron-sulfur (Fe-S) centers, to quinones in the respiratory chain. The immediate electron acceptor for the enzyme in this species is believed to be a menaquinone. Couples the redox reaction to proton translocation (for every two electrons transferred, four hydrogen ions are translocated across the cytoplasmic membrane), and thus conserves the redox energy in a proton gradient. In Acidothermus cellulolyticus (strain ATCC 43068 / DSM 8971 / 11B), this protein is NADH-quinone oxidoreductase subunit B.